The chain runs to 858 residues: Potassium transporter 7 (858 aa).

Composition is skewed to acidic residues over residues 1–16 (MAEE…EEID) and 38–53 (QDDD…DNDG). Residues 1–68 (MAEESSMEGS…LESDEDEIPE (68 aa)) are disordered. Over 1–104 (MAEESSMEGS…DYEDLTVGRK (104 aa)) the chain is Cytoplasmic. A helical membrane pass occupies residues 105 to 125 (VLLAFQTLGVVFGDVGTSPLY). Residues 126–147 (TFSVMFSKSPVQEKEDVIGALS) lie on the Extracellular side of the membrane. The helical transmembrane segment at 148 to 168 (LVLYTLLLVPLIKYVLVVLWA) threads the bilayer. Over 169–232 (NDDGEGGTFA…KLENSLILKK (64 aa)) the chain is Cytoplasmic. Residues 233 to 253 (ILLVLVLAGTSMVIADGVVTP) form a helical membrane-spanning segment. At 254–269 (AMSVMSAVGGLKVGVD) the chain is on the extracellular side. A helical membrane pass occupies residues 270-290 (VVEQDQVVMISVAFLVILFSL). Topologically, residues 291-297 (QKYGTSK) are cytoplasmic. A helical membrane pass occupies residues 298–318 (MGLVVGPALLIWFCSLAGIGI). The Extracellular segment spans residues 319-345 (YNLIKYDSSVYRAFNPVHIYYFFKRNS). A helical membrane pass occupies residues 346-366 (INAWYALGGCILCATGSEALF). Topologically, residues 367-380 (ADLCYFSVRSVQLT) are cytoplasmic. Residues 381 to 401 (FVCLVLPCLMLGYMGQAAYLM) traverse the membrane as a helical segment. Over 402–413 (ENHADASQAFFS) the chain is Extracellular. The chain crosses the membrane as a helical span at residues 414 to 434 (SVPGSAFWPVLFIANIAALIA). Residues 435-470 (SRTMTTATFSCIKQSTALGCFPRLKIIHTSRKFMGQ) lie on the Cytoplasmic side of the membrane. A helical transmembrane segment spans residues 471 to 491 (IYIPVLNWFLLAVCLVVVCSI). Topologically, residues 492–496 (SSIDE) are extracellular. A helical transmembrane segment spans residues 497–517 (IGNAYGMAELGVMMTTTILVT). Position 518 (leucine 518) is a topological domain, cytoplasmic. Residues 519–539 (IMLLIWQINIVIVIAFLVVFL) form a helical membrane-spanning segment. The Extracellular portion of the chain corresponds to 540–552 (GVELVFFSSVIAS). A helical membrane pass occupies residues 553 to 573 (VGDGSWIILVFAVIMFGIMYI). Topologically, residues 574 to 858 (WNYGSKLRYE…LMQVGMTYMV (285 aa)) are cytoplasmic. The interval 707–731 (QERSLESDGNDDSDSEEDFPGSRVV) is disordered. Residues 714-725 (DGNDDSDSEEDF) show a composition bias toward acidic residues. Phosphoserine is present on residues serine 719 and serine 721.

It belongs to the HAK/KUP transporter (TC 2.A.72.3) family.

Its subcellular location is the cell membrane. Functionally, probable potassium transporter. This Arabidopsis thaliana (Mouse-ear cress) protein is Potassium transporter 7 (POT7).